The sequence spans 37 residues: Large ribosomal subunit protein bL36 (37 aa).

This sequence belongs to the bacterial ribosomal protein bL36 family.

The chain is Large ribosomal subunit protein bL36 from Nostoc sp. (strain PCC 7120 / SAG 25.82 / UTEX 2576).